The sequence spans 313 residues: Porphobilinogen deaminase (313 aa).

Cys242 carries the post-translational modification S-(dipyrrolylmethanemethyl)cysteine.

The protein belongs to the HMBS family. As to quaternary structure, monomer. The cofactor is dipyrromethane.

It carries out the reaction 4 porphobilinogen + H2O = hydroxymethylbilane + 4 NH4(+). It participates in porphyrin-containing compound metabolism; protoporphyrin-IX biosynthesis; coproporphyrinogen-III from 5-aminolevulinate: step 2/4. Functionally, tetrapolymerization of the monopyrrole PBG into the hydroxymethylbilane pre-uroporphyrinogen in several discrete steps. The polypeptide is Porphobilinogen deaminase (Pseudomonas fluorescens (strain Pf0-1)).